The sequence spans 254 residues: Proline-rich protein 23A3 (254 aa).

Disordered regions lie at residues 1–50 (MLRT…LEAP), 161–196 (ASPPDDQANGNFSSIPGVPSPLSQDQVPGPSTGAEQ), and 212–254 (PFPG…LVYE). Residues 35–50 (EPACPEPLAQPELEAP) are compositionally biased toward low complexity. Residues 214 to 241 (PGSPLQPLPPSPSRNPQEQLPPCPPCSP) are compositionally biased toward pro residues. Residues 243-254 (APRRARKRLVYE) are compositionally biased toward basic residues.

This sequence belongs to the PRR23 family.

This Mus musculus (Mouse) protein is Proline-rich protein 23A3.